Consider the following 56-residue polypeptide: Small ribosomal subunit protein uS14 (56 aa).

Zn(2+) contacts are provided by cysteine 21, cysteine 24, cysteine 39, and cysteine 42.

It belongs to the universal ribosomal protein uS14 family. Zinc-binding uS14 subfamily. In terms of assembly, part of the 30S ribosomal subunit. Zn(2+) serves as cofactor.

Binds 16S rRNA, required for the assembly of 30S particles. The chain is Small ribosomal subunit protein uS14 from Thermococcus kodakarensis (strain ATCC BAA-918 / JCM 12380 / KOD1) (Pyrococcus kodakaraensis (strain KOD1)).